The chain runs to 315 residues: Eukaryotic translation initiation factor 2 subunit 1 (315 aa).

Residues 17 to 88 enclose the S1 motif domain; it reads EDVVMVNVRS…EKGYIDLSKR (72 aa). Ser49 bears the Phosphoserine; by HRI mark. Ser52 is subject to Phosphoserine. Lys141 carries the N6-acetyllysine modification. Phosphoserine is present on Ser158. 2 positions are modified to phosphothreonine: Thr279 and Thr281. Residues 293-315 form a disordered region; the sequence is LERENAEVDGDDDAEEMEAKAED. The segment covering 299–308 has biased composition (acidic residues); sequence EVDGDDDAEE.

Belongs to the eIF-2-alpha family. As to quaternary structure, eukaryotic translation initiation factor 2 eIF2 is a heterotrimeric complex composed of an alpha (EIF2S1), a beta (EIF2S2) and a gamma (EIF2S3) chain. eIF2 is member of the 43S pre-initiation complex (43S PIC). eIF2 forms a complex with at least CELF1/CUGBP1, CALR, CALR3, EIF2S1, EIF2S2, HSP90B1 and HSPA5. Interaction with METAP2 protects EIF2S1 from inhibitory phosphorylation. Interacts with ABCF1 isoform 2. Associates with ribosomes. Interacts with DDX3X in an RNA-independent manner. Interacts with CDC123. (Microbial infection) Interacts with rotavirus A non-structural protein 2; this interaction probably plays a role in the sequestration of IF2A in viral factories. Interacts with rotavirus A non-structural protein 5; this interaction probably plays a role in its sequestration in viral factories. Phosphorylation at Ser-49 and Ser-52 stabilizes the eIF-2/GDP/eIF2B complex and prevents GDP/GTP exchange reaction, thus impairing the recycling of eIF-2 between successive rounds of initiation and leading to global inhibition of translation, while concomitantly initiating the preferential translation of integrated stress response (ISR)-specific mRNAs. Substrate for at least 4 kinases: EIF2AK1/HRI, EIF2AK2/PKR, EIF2AK3/PERK and EIF2AK4/GCN2. Phosphorylation on Ser-52 by the EIF2AK4/GCN2 protein kinase occurs in response to amino acid starvation and UV irradiation. Phosphorylation at Ser-52 by the EIF2AK3/PERK protein kinase occurs in response to the unfolded protein response. Phosphorylation at Ser-52 by EIF2AK1/HRI in response to mitochondrial damage promotes relocalization to the mitochondrial surface. In terms of processing, (Microbial infection) Phosphorylation by vaccinia virus protein E3 and rotavirus A stabilizes the eIF-2/GDP/eIF2B complex and prevents GDP/GTP exchange reaction, thus impairing the recycling of eIF-2 between successive rounds of initiation and leading to global inhibition of translation.

Its subcellular location is the cytoplasm. The protein localises to the stress granule. It is found in the cytosol. It localises to the mitochondrion. Activity is regulated by phosphorylation at Ser-49 and Ser-52, which stabilizes the eIF2/GDP/eIF2B complex and prevents the eIF2B-mediated exchange of GDP for GTP, thereby preventing the formation of the 43S pre-initiation complex (43S PIC). This results in the global attenuation of 5' cap-dependent protein synthesis and concomitant translation of ISR-specific mRNAs that contain a short upstream open reading frame (uORF) in their 5' UTR, such as ATF4, ATF5, DDIT3/CHOP and PPP1R15A/GADD34. Member of the eIF2 complex that functions in the early steps of protein synthesis by forming a ternary complex with GTP and initiator tRNA. This complex binds to a 40S ribosomal subunit, followed by mRNA binding to form a 43S pre-initiation complex (43S PIC). Junction of the 60S ribosomal subunit to form the 80S initiation complex is preceded by hydrolysis of the GTP bound to eIF2 and release of an eIF2-GDP binary complex. In order for eIF2 to recycle and catalyze another round of initiation, the GDP bound to eIF2 must exchange with GTP by way of a reaction catalyzed by eIF2B. EIF2S1/eIF2-alpha is a key component of the integrated stress response (ISR), required for adaptation to various stress: phosphorylation by metabolic-stress sensing protein kinases (EIF2AK1/HRI, EIF2AK2/PKR, EIF2AK3/PERK and EIF2AK4/GCN2) in response to stress converts EIF2S1/eIF2-alpha in a global protein synthesis inhibitor, leading to an attenuation of cap-dependent translation, while concomitantly initiating the preferential translation of ISR-specific mRNAs, such as the transcriptional activators ATF4 and QRICH1, and hence allowing ATF4- and QRICH1-mediated reprogramming. EIF2S1/eIF2-alpha also acts as an activator of mitophagy in response to mitochondrial damage: phosphorylation by EIF2AK1/HRI promotes relocalization to the mitochondrial surface, thereby triggering PRKN-independent mitophagy. The protein is Eukaryotic translation initiation factor 2 subunit 1 of Homo sapiens (Human).